A 131-amino-acid chain; its full sequence is Small ribosomal subunit protein uS8 (131 aa).

It belongs to the universal ribosomal protein uS8 family. As to quaternary structure, part of the 30S ribosomal subunit. Contacts proteins S5 and S12.

One of the primary rRNA binding proteins, it binds directly to 16S rRNA central domain where it helps coordinate assembly of the platform of the 30S subunit. In Campylobacter hominis (strain ATCC BAA-381 / DSM 21671 / CCUG 45161 / LMG 19568 / NCTC 13146 / CH001A), this protein is Small ribosomal subunit protein uS8.